A 493-amino-acid chain; its full sequence is UPF0699 transmembrane protein YdbT (493 aa).

Transmembrane regions (helical) follow at residues 18-38, 46-66, 188-208, 232-252, 370-390, and 393-413; these read CHTI…VYIV, FYGA…SIIK, LMAA…FALI, IGIY…FSIA, VIFS…WGYL, and ILLP…AWTI.

This sequence belongs to the UPF0699 family.

The protein resides in the cell membrane. The protein is UPF0699 transmembrane protein YdbT (ydbT) of Bacillus subtilis (strain 168).